The primary structure comprises 1306 residues: Synergin gamma (1306 aa).

Residues 113 to 153 (MQKQFAEEQQKRFEQQQKLLEEERKRRQFEEQKQKLRLLSS) are a coiled coil. Disordered regions lie at residues 176–196 (GFSR…KQGP) and 252–285 (SGPA…PAQS). Positions 258-272 (EAEKTSDQTLSKEES) are enriched in basic and acidic residues. The region spanning 293–404 (NESLVPDAYK…TPVSQPTAMP (112 aa)) is the EH domain. Positions 455-459 (DFQDF) match the DFXDF motif 1 motif. The tract at residues 460 to 494 (QDASKSGSIDDSFTDFQEMPASSKTSNSQHGNSAP) is disordered. Serine 471 carries the phosphoserine modification. Position 509 is an N6-acetyllysine (lysine 509). The interval 514-778 (KGISTDKPSE…ADFHSSKFSS (265 aa)) is interaction with AP1G1. Positions 559-601 (STGTDDGFTDFKTADSVSPLEPPTKDTFPSAFASGAAQQTQTQ) are disordered. A Phosphoserine modification is found at serine 576. Residues 661–673 (LADDFGEFNLFGE) are interaction with AP1G1, AP1G2 and GGA1. The DFXDF motif 2 signature appears at 685-689 (DFADF). The disordered stretch occupies residues 697–730 (ISSEPKASDKYEALREEVSPSPLSSSTVEGAQHP). Residues 702–714 (KASDKYEALREEV) show a composition bias toward basic and acidic residues. Serine 715 is subject to Phosphoserine. Lysine 736 carries the post-translational modification N6-acetyllysine. A phosphoserine mark is found at serine 744 and serine 764. The DFXDF motif 3 signature appears at 767–771 (DFADF). Serine 804, serine 844, serine 847, serine 901, serine 911, serine 927, serine 974, serine 998, serine 1065, serine 1067, serine 1079, and serine 1090 each carry phosphoserine. 2 disordered regions span residues 986–1016 (PTVD…ADDF) and 1065–1090 (SLSL…RDRS). Polar residues predominate over residues 993–1005 (ETSCPSPASSVAS). Threonine 1092 carries the phosphothreonine modification.

Self-associates. Interacts with GGA1 (via GAE domain). Interacts with GGA2 and GGA3. Interacts with AP1G1 (via GAE domain), a subunit of adapter protein complex AP-1. Interacts with AP1G2 (via GAE domain) a subunit of adapter protein complex AP-1. Component of the aftiphilin/p200/gamma-synergin complex, at least composed of AFTPH/aftiphilin, HEATR5B/p200a and SYNRG/gamma-synergin, which plays a role in the AP1G1/AP-1-mediated trafficking of transferrin from early to recycling endosomes. Within the complex interacts with AFTPH/aftiphilin and HEATR5B/p200a; the interactions are direct. Interacts (via EH domain) with SCAMP1.

The protein resides in the cytoplasm. It localises to the cytosol. It is found in the golgi apparatus. Its subcellular location is the trans-Golgi network membrane. The protein localises to the perinuclear region. The protein resides in the cytoplasmic vesicle. It localises to the clathrin-coated vesicle. Its function is as follows. Plays a role in endocytosis and/or membrane trafficking at the trans-Golgi network (TGN). May act by linking the adapter protein complex AP-1 to other proteins. Component of clathrin-coated vesicles. Component of the aftiphilin/p200/gamma-synergin complex, which plays roles in AP1G1/AP-1-mediated protein trafficking including the trafficking of transferrin from early to recycling endosomes, and the membrane trafficking of furin and the lysosomal enzyme cathepsin D between the trans-Golgi network (TGN) and endosomes. In Mus musculus (Mouse), this protein is Synergin gamma (Synrg).